The chain runs to 612 residues: Alpha-glycerophosphate oxidase (612 aa).

Position 21 to 49 (21 to 49) interacts with FAD; that stretch reads DLLIIGGGITGAGVALQAAASGLDTGLIE. Basic and acidic residues predominate over residues 399–408; it reads ETSTSEKELD. The tract at residues 399-418 is disordered; it reads ETSTSEKELDPSAVSRGSSF.

It belongs to the FAD-dependent glycerol-3-phosphate dehydrogenase family. It depends on FAD as a cofactor.

It is found in the cytoplasm. The enzyme catalyses sn-glycerol 3-phosphate + O2 = dihydroxyacetone phosphate + H2O2. In Streptococcus pyogenes serotype M1, this protein is Alpha-glycerophosphate oxidase (glpO).